A 269-amino-acid polypeptide reads, in one-letter code: 4-hydroxy-tetrahydrodipicolinate reductase (269 aa).

NAD(+)-binding positions include 8–13 (GAAGRM) and E34. R35 contacts NADP(+). NAD(+) contacts are provided by residues 98 to 100 (GTT) and 122 to 125 (APNY). The Proton donor/acceptor role is filled by H155. (S)-2,3,4,5-tetrahydrodipicolinate is bound at residue H156. The Proton donor role is filled by K159. Position 165-166 (165-166 (GT)) interacts with (S)-2,3,4,5-tetrahydrodipicolinate.

This sequence belongs to the DapB family.

The protein localises to the cytoplasm. The catalysed reaction is (S)-2,3,4,5-tetrahydrodipicolinate + NAD(+) + H2O = (2S,4S)-4-hydroxy-2,3,4,5-tetrahydrodipicolinate + NADH + H(+). It catalyses the reaction (S)-2,3,4,5-tetrahydrodipicolinate + NADP(+) + H2O = (2S,4S)-4-hydroxy-2,3,4,5-tetrahydrodipicolinate + NADPH + H(+). It functions in the pathway amino-acid biosynthesis; L-lysine biosynthesis via DAP pathway; (S)-tetrahydrodipicolinate from L-aspartate: step 4/4. Catalyzes the conversion of 4-hydroxy-tetrahydrodipicolinate (HTPA) to tetrahydrodipicolinate. In Vibrio parahaemolyticus serotype O3:K6 (strain RIMD 2210633), this protein is 4-hydroxy-tetrahydrodipicolinate reductase.